Consider the following 164-residue polypeptide: Transcriptional repressor NrdR (164 aa).

The segment at 3-34 (CPFCRHEDSRVVDSRSLDDGSAIRRRRQCQAC) is a zinc-finger region. One can recognise an ATP-cone domain in the interval 46–136 (LTVVKRSGVA…VYRDFESLDD (91 aa)).

This sequence belongs to the NrdR family. It depends on Zn(2+) as a cofactor.

Negatively regulates transcription of bacterial ribonucleotide reductase nrd genes and operons by binding to NrdR-boxes. In Micrococcus luteus (strain ATCC 4698 / DSM 20030 / JCM 1464 / CCM 169 / CCUG 5858 / IAM 1056 / NBRC 3333 / NCIMB 9278 / NCTC 2665 / VKM Ac-2230) (Micrococcus lysodeikticus), this protein is Transcriptional repressor NrdR.